Consider the following 257-residue polypeptide: Galactitol 2-dehydrogenase (257 aa).

NAD(+)-binding positions include 21–23 (RAI), 67–68 (DV), Asn94, Tyr162, and Lys166. The Proton acceptor role is filled by Tyr162.

It belongs to the short-chain dehydrogenases/reductases (SDR) family. In terms of assembly, homotetramer. Mg(2+) is required as a cofactor.

It catalyses the reaction galactitol + NAD(+) = keto-D-tagatose + NADH + H(+). In terms of biological role, catalyzes the oxidation of galactitol to D-tagatose. Also catalyzes the oxidation of a wide range of substrates, including polyvalent aliphatic alcohols and polyols, to the corresponding ketones and ketoses. Galactitol is the preferred substrate. The sequence is that of Galactitol 2-dehydrogenase from Rhizobium johnstonii (strain DSM 114642 / LMG 32736 / 3841) (Rhizobium leguminosarum bv. viciae).